The primary structure comprises 336 residues: Serpentine receptor class delta-51 (336 aa).

7 helical membrane-spanning segments follow: residues 14–34, 48–68, 93–113, 133–153, 188–208, 237–257, and 275–295; these read VYYSLNVTLALSINILLLFIM, YLFNTALFEIIVSLSTYFAQC, CFVTFAVVQCSVVAASFSILL, ATTFIIFSFFPTVMLLFQLLT, AAIIAQSLISLGVYMSPLIAF, GLLIQTLIPFCVYIPPYSYFL, and IFGSFTAFINPLLTFYFVLPY.

Belongs to the nematode receptor-like protein srd family.

It is found in the membrane. The protein is Serpentine receptor class delta-51 (srd-51) of Caenorhabditis elegans.